A 510-amino-acid chain; its full sequence is Mitogen-activated protein kinase 9 (510 aa).

The region spanning 23–314 (YQIQEVIGKG…AEEALADPYF (292 aa)) is the Protein kinase domain. Residues 29–37 (IGKGSYGVV) and Lys-52 each bind ATP. Residue Asp-149 is the Proton acceptor of the active site. Phosphothreonine is present on Thr-185. The TXY motif lies at 185–187 (TDY). At Tyr-187 the chain carries Phosphotyrosine. Thr-190 bears the Phosphothreonine mark. Residues 393–461 (NYGKGEKGSP…SDYRNGTSQT (69 aa)) are disordered. The segment covering 410–431 (LPRERVPAPKKENGSHNHDIEN) has biased composition (basic and acidic residues). Positions 433 to 461 (SIASLVTTLESPPTSQHEGSDYRNGTSQT) are enriched in polar residues.

The protein belongs to the protein kinase superfamily. CMGC Ser/Thr protein kinase family. MAP kinase subfamily. In terms of processing, dually phosphorylated on Thr-185 and Tyr-187, which activates the enzyme.

It catalyses the reaction L-seryl-[protein] + ATP = O-phospho-L-seryl-[protein] + ADP + H(+). The catalysed reaction is L-threonyl-[protein] + ATP = O-phospho-L-threonyl-[protein] + ADP + H(+). Its activity is regulated as follows. Activated by threonine and tyrosine phosphorylation. The chain is Mitogen-activated protein kinase 9 (MPK9) from Arabidopsis thaliana (Mouse-ear cress).